The chain runs to 351 residues: Glucose 1-dehydrogenase 1 (351 aa).

Cysteine 39 is a Zn(2+) binding site. Threonine 41 contacts substrate. Positions 64 and 65 each coordinate Zn(2+). Residues glutamate 113 and glutamate 149 each coordinate substrate. Glutamate 149 provides a ligand contact to Zn(2+). Residues 182 to 185 (AGPI), 265 to 267 (LGI), and 292 to 294 (ATN) each bind NADP(+). Asparagine 294 serves as a coordination point for substrate.

This sequence belongs to the zinc-containing alcohol dehydrogenase family. Glucose 1-dehydrogenase subfamily. The cofactor is Zn(2+).

It carries out the reaction D-glucose + NAD(+) = D-glucono-1,5-lactone + NADH + H(+). The catalysed reaction is D-glucose + NADP(+) = D-glucono-1,5-lactone + NADPH + H(+). Its function is as follows. Catalyzes the NAD(P)(+)-dependent oxidation of D-glucose to D-gluconate via gluconolactone. Can utilize both NAD(+) and NADP(+) as electron acceptor. Is involved in the degradation of glucose through a non-phosphorylative variant of the Entner-Doudoroff pathway. This Vulcanisaeta moutnovskia (strain 768-28) protein is Glucose 1-dehydrogenase 1.